The primary structure comprises 222 residues: MGTSDYLARMRVEYGSVEKDGSSDLDVDWLGPDPATGWVTLLHQWMAEAEQAGAAEPNAMVVATVDDRGRPVTRTVLCKSVDASGVSFYTNYDSEKGRQLAAAPYASATFPWYLVGRQVHVHGAVTKVSAEETADYWSKRPRGSQLGAWASQQSLPIASRAALMQQLTEVTERFADVEEIPVPPHWGGYLIAAEVVEFWQGRENRVHNRIRVCGGQVERLQP.

Residues 11-14 and lysine 79 contribute to the substrate site; that span reads RVEY. FMN-binding positions include 74-79, 89-90, lysine 96, and glutamine 118; these read RTVLCK and YT. Positions 136, 140, and 144 each coordinate substrate. FMN-binding positions include 153 to 154 and tryptophan 199; that span reads QS. 205 to 207 contacts substrate; sequence RVH. Arginine 209 is an FMN binding site.

This sequence belongs to the pyridoxamine 5'-phosphate oxidase family. Homodimer. FMN serves as cofactor.

The catalysed reaction is pyridoxamine 5'-phosphate + O2 + H2O = pyridoxal 5'-phosphate + H2O2 + NH4(+). It carries out the reaction pyridoxine 5'-phosphate + O2 = pyridoxal 5'-phosphate + H2O2. Its pathway is cofactor metabolism; pyridoxal 5'-phosphate salvage; pyridoxal 5'-phosphate from pyridoxamine 5'-phosphate: step 1/1. It functions in the pathway cofactor metabolism; pyridoxal 5'-phosphate salvage; pyridoxal 5'-phosphate from pyridoxine 5'-phosphate: step 1/1. In terms of biological role, catalyzes the oxidation of either pyridoxine 5'-phosphate (PNP) or pyridoxamine 5'-phosphate (PMP) into pyridoxal 5'-phosphate (PLP). This Mycolicibacterium vanbaalenii (strain DSM 7251 / JCM 13017 / BCRC 16820 / KCTC 9966 / NRRL B-24157 / PYR-1) (Mycobacterium vanbaalenii) protein is Pyridoxine/pyridoxamine 5'-phosphate oxidase.